The chain runs to 421 residues: Gamma-glutamyl phosphate reductase (421 aa).

The protein belongs to the gamma-glutamyl phosphate reductase family.

The protein localises to the cytoplasm. It carries out the reaction L-glutamate 5-semialdehyde + phosphate + NADP(+) = L-glutamyl 5-phosphate + NADPH + H(+). It functions in the pathway amino-acid biosynthesis; L-proline biosynthesis; L-glutamate 5-semialdehyde from L-glutamate: step 2/2. Catalyzes the NADPH-dependent reduction of L-glutamate 5-phosphate into L-glutamate 5-semialdehyde and phosphate. The product spontaneously undergoes cyclization to form 1-pyrroline-5-carboxylate. The chain is Gamma-glutamyl phosphate reductase from Brucella melitensis biotype 1 (strain ATCC 23456 / CCUG 17765 / NCTC 10094 / 16M).